Reading from the N-terminus, the 293-residue chain is Probable 2-(5''-triphosphoribosyl)-3'-dephosphocoenzyme-A synthase (293 aa).

The protein belongs to the CitG/MdcB family.

The catalysed reaction is 3'-dephospho-CoA + ATP = 2'-(5''-triphospho-alpha-D-ribosyl)-3'-dephospho-CoA + adenine. Functionally, involved in the formation of 2-(5''-phosphoribosyl)-3'-dephosphocoenzyme-A, the prosthetic group of the acyl-carrier protein of the malonate decarboxylase. This chain is Probable 2-(5''-triphosphoribosyl)-3'-dephosphocoenzyme-A synthase, found in Pseudomonas paraeruginosa (strain DSM 24068 / PA7) (Pseudomonas aeruginosa (strain PA7)).